Reading from the N-terminus, the 329-residue chain is Tagatose 1,6-diphosphate aldolase 2 (329 aa).

The protein belongs to the aldolase LacD family.

The enzyme catalyses D-tagatofuranose 1,6-bisphosphate = D-glyceraldehyde 3-phosphate + dihydroxyacetone phosphate. It functions in the pathway carbohydrate metabolism; D-tagatose 6-phosphate degradation; D-glyceraldehyde 3-phosphate and glycerone phosphate from D-tagatose 6-phosphate: step 2/2. This is Tagatose 1,6-diphosphate aldolase 2 (lacD2) from Streptococcus mutans serotype c (strain ATCC 700610 / UA159).